We begin with the raw amino-acid sequence, 438 residues long: Protein ROOT INITIATION DEFECTIVE 3 (438 aa).

WD repeat units lie at residues 36 to 74, 76 to 115, 118 to 157, 171 to 212, 214 to 253, and 261 to 300; these read AHGL…AEVK, YPVE…LLKK, GHYR…DDFQ, EHTM…LLKN, IFPS…EYGT, and EKGK…HVRT. A coiled-coil region spans residues 394–434; that stretch reads AATEMEMERLKLEYKRSLQMNEQWQKNYENLLQVVMEEEQI.

In terms of biological role, involved in meristem development. Acts as a negative regulator of the CUC-STM pathway in shoot apical meristem (SAM) neo-formation. This chain is Protein ROOT INITIATION DEFECTIVE 3 (RID3), found in Arabidopsis thaliana (Mouse-ear cress).